The following is a 64-amino-acid chain: Large ribosomal subunit protein bL32 (64 aa).

Belongs to the bacterial ribosomal protein bL32 family.

The sequence is that of Large ribosomal subunit protein bL32 from Flavobacterium johnsoniae (strain ATCC 17061 / DSM 2064 / JCM 8514 / BCRC 14874 / CCUG 350202 / NBRC 14942 / NCIMB 11054 / UW101) (Cytophaga johnsonae).